A 51-amino-acid polypeptide reads, in one-letter code: Insulin (51 aa).

3 disulfides stabilise this stretch: cysteine 7-cysteine 37, cysteine 19-cysteine 50, and cysteine 36-cysteine 41.

It belongs to the insulin family. Heterodimer of a B chain and an A chain linked by two disulfide bonds.

Its subcellular location is the secreted. In terms of biological role, insulin decreases blood glucose concentration. It increases cell permeability to monosaccharides, amino acids and fatty acids. It accelerates glycolysis, the pentose phosphate cycle, and glycogen synthesis in liver. The chain is Insulin (INS) from Acomys cahirinus (Cairo spiny mouse).